We begin with the raw amino-acid sequence, 1733 residues long: Gag-Pol polyprotein (1733 aa).

Glycine 2 carries N-myristoyl glycine; by host lipidation. Over residues 108 to 121 (LPTAPVLPPGPSAQ) the composition is skewed to pro residues. 3 disordered regions span residues 108 to 218 (LPTA…LRMG), 449 to 469 (KEERRRAEDEQRERERDRRRH), and 511 to 550 (WAKDCPKKPRGPRGPRPQTSLLTLGDXGGQGQEPPPEPRI). A PTAP/PSAP motif motif is present at residues 109–112 (PTAP). The short motif at 128 to 132 (LYPAL) is the LYPX(n)L motif element. The PPXY motif motif lies at 161-164 (PPPY). Serine 190 carries the post-translational modification Phosphoserine; by host. A coiled-coil region spans residues 436 to 476 (EEREERIRREIEEKEERRRAEDEQRERERDRRRHREMSKLL). The segment covering 449-464 (KEERRRAEDEQRERER) has biased composition (basic and acidic residues). A CCHC-type zinc finger spans residues 500–517 (DQCAYCKEKGHWAKDCPK). The segment covering 526–535 (RPQTSLLTLG) has biased composition (low complexity). Residues 559-629 (VTFLVDTGAQ…CPYPLLGRDL (71 aa)) form the Peptidase A2 domain. Residue aspartate 564 is the Protease; shared with dimeric partner of the active site. 4 residues coordinate RNA: tyrosine 721, aspartate 771, arginine 773, and proline 787. Residues 739 to 930 (LDQGILVPCQ…KQVKYLGYLL (192 aa)) form the Reverse transcriptase domain. Aspartate 807 is a Mg(2+) binding site. RNA is bound by residues asparagine 851 and proline 853. Aspartate 881 and aspartate 882 together coordinate Mg(2+). DNA contacts are provided by arginine 941, arginine 955, arginine 958, and phenylalanine 966. The RNA site is built by lysine 1054 and lysine 1055. Tryptophan 1063 contacts DNA. Position 1082 (lysine 1082) interacts with RNA. Position 1113 (arginine 1113) interacts with DNA. An RNase H type-1 domain is found at 1172–1318 (PDADYTWYTD…ADQAAREAAM (147 aa)). Aspartate 1181 contributes to the Mg(2+) binding site. RNA is bound by residues serine 1184 and leucine 1186. Residues glutamine 1187, serine 1214, and glutamine 1216 each coordinate DNA. Mg(2+) contacts are provided by glutamate 1219 and aspartate 1240. RNA is bound by residues arginine 1242 and arginine 1266. 3 residues coordinate Mg(2+): aspartate 1310, aspartate 1453, and aspartate 1512. Residues 1442–1600 (RGHRPGTHWE…TPYEILYGAP (159 aa)) enclose the Integrase catalytic domain.

In terms of assembly, homohexamer. Further associates as homomultimer. The virus core is composed of a lattice formed from hexagonal rings, each containing six capsid monomers. Homodimer. The protease is a homodimer, whose active site consists of two apposed aspartic acid residues. The reverse transcriptase is a monomer. Mg(2+) is required as a cofactor. Mn(2+) serves as cofactor. Post-translationally, specific enzymatic cleavages by the viral protease yield mature proteins. The protease is released by autocatalytic cleavage. The polyprotein is cleaved during and after budding, this process is termed maturation. In terms of processing, sumoylated. Required for virus replication. Phosphorylated on serine residues.

It is found in the host cell membrane. The protein resides in the virion. It carries out the reaction DNA(n) + a 2'-deoxyribonucleoside 5'-triphosphate = DNA(n+1) + diphosphate. The catalysed reaction is Endonucleolytic cleavage to 5'-phosphomonoester.. Its function is as follows. Plays a role in budding and is processed by the viral protease during virion maturation outside the cell. During budding, it recruits, in a PPXY-dependent or independent manner, Nedd4-like ubiquitin ligases that conjugate ubiquitin molecules to Gag, or to Gag binding host factors. Interaction with HECT ubiquitin ligases probably link the viral protein to the host ESCRT pathway and facilitate release. Functionally, targets Gag and gag-pol polyproteins to the plasma membrane via a multipartite membrane binding signal, that includes its myristoylated N-terminus. Also mediates nuclear localization of the pre-integration complex. Forms the spherical core of the virion that encapsulates the genomic RNA-nucleocapsid complex. In terms of biological role, involved in the packaging and encapsidation of two copies of the genome. Binds with high affinity to conserved UCUG elements within the packaging signal, located near the 5'-end of the genome. This binding is dependent on genome dimerization. Its function is as follows. The aspartyl protease mediates proteolytic cleavages of Gag and Gag-Pol polyproteins during or shortly after the release of the virion from the plasma membrane. Cleavages take place as an ordered, step-wise cascade to yield mature proteins. This process is called maturation. Displays maximal activity during the budding process just prior to particle release from the cell. Functionally, multifunctional enzyme that converts the viral dimeric RNA genome into dsDNA in the cytoplasm, shortly after virus entry into the cell. This enzyme displays a DNA polymerase activity that can copy either DNA or RNA templates, and a ribonuclease H (RNase H) activity that cleaves the RNA strand of RNA-DNA heteroduplexes in a partially processive 3' to 5' endonucleasic mode. Conversion of viral genomic RNA into dsDNA requires many steps. A tRNA binds to the primer-binding site (PBS) situated at the 5' end of the viral RNA. RT uses the 3' end of the tRNA primer to perform a short round of RNA-dependent minus-strand DNA synthesis. The reading proceeds through the U5 region and ends after the repeated (R) region which is present at both ends of viral RNA. The portion of the RNA-DNA heteroduplex is digested by the RNase H, resulting in a ssDNA product attached to the tRNA primer. This ssDNA/tRNA hybridizes with the identical R region situated at the 3' end of viral RNA. This template exchange, known as minus-strand DNA strong stop transfer, can be either intra- or intermolecular. RT uses the 3' end of this newly synthesized short ssDNA to perform the RNA-dependent minus-strand DNA synthesis of the whole template. RNase H digests the RNA template except for a polypurine tract (PPT) situated at the 5' end of the genome. It is not clear if both polymerase and RNase H activities are simultaneous. RNase H probably can proceed both in a polymerase-dependent (RNA cut into small fragments by the same RT performing DNA synthesis) and a polymerase-independent mode (cleavage of remaining RNA fragments by free RTs). Secondly, RT performs DNA-directed plus-strand DNA synthesis using the PPT that has not been removed by RNase H as primers. PPT and tRNA primers are then removed by RNase H. The 3' and 5' ssDNA PBS regions hybridize to form a circular dsDNA intermediate. Strand displacement synthesis by RT to the PBS and PPT ends produces a blunt ended, linear dsDNA copy of the viral genome that includes long terminal repeats (LTRs) at both ends. Catalyzes viral DNA integration into the host chromosome, by performing a series of DNA cutting and joining reactions. This enzyme activity takes place after virion entry into a cell and reverse transcription of the RNA genome in dsDNA. The first step in the integration process is 3' processing. This step requires a complex comprising the viral genome, matrix protein and integrase. This complex is called the pre-integration complex (PIC). The integrase protein removes 2 nucleotides from each 3' end of the viral DNA, leaving recessed CA OH's at the 3' ends. In the second step that requires cell division, the PIC enters cell nucleus. In the third step, termed strand transfer, the integrase protein joins the previously processed 3' ends to the 5' ends of strands of target cellular DNA at the site of integration. The last step is viral DNA integration into host chromosome. The sequence is that of Gag-Pol polyprotein (gag-pol) from Homo sapiens (Human).